The sequence spans 35 residues: Photosystem II reaction center protein M (35 aa).

A helical membrane pass occupies residues 7-27 (GFIATILFVLVPTVFLLILYI).

This sequence belongs to the PsbM family. PSII is composed of 1 copy each of membrane proteins PsbA, PsbB, PsbC, PsbD, PsbE, PsbF, PsbH, PsbI, PsbJ, PsbK, PsbL, PsbM, PsbT, PsbX, PsbY, PsbZ, Psb30/Ycf12, peripheral proteins PsbO, CyanoQ (PsbQ), PsbU, PsbV and a large number of cofactors. It forms dimeric complexes.

The protein resides in the cellular thylakoid membrane. Functionally, one of the components of the core complex of photosystem II (PSII). PSII is a light-driven water:plastoquinone oxidoreductase that uses light energy to abstract electrons from H(2)O, generating O(2) and a proton gradient subsequently used for ATP formation. It consists of a core antenna complex that captures photons, and an electron transfer chain that converts photonic excitation into a charge separation. This subunit is found at the monomer-monomer interface. The sequence is that of Photosystem II reaction center protein M from Gloeothece citriformis (strain PCC 7424) (Cyanothece sp. (strain PCC 7424)).